The primary structure comprises 145 residues: Secreted RxLR effector protein 100 (145 aa).

An N-terminal signal peptide occupies residues M1–A19. Positions R27 to R30 match the RxLR motif. Positions S38–K77 are disordered. N59 is a glycosylation site (N-linked (GlcNAc...) asparagine).

This sequence belongs to the RxLR effector family.

Its subcellular location is the secreted. It localises to the host nucleus. Functionally, secreted effector that dos not suppress the host cell death induced by cell death-inducing proteins. The sequence is that of Secreted RxLR effector protein 100 from Plasmopara viticola (Downy mildew of grapevine).